A 260-amino-acid polypeptide reads, in one-letter code: Adenosylcobinamide-GDP ribazoletransferase (260 aa).

7 helical membrane-spanning segments follow: residues 42–62 (PLAG…ANAI), 64–84 (LPPL…TGAL), 117–137 (FAAL…MAII), 144–164 (YALL…LAFW), 192–212 (GLGL…VALI), 214–234 (ALVL…AKIG), and 240–260 (TLGA…VMAL).

Belongs to the CobS family. It depends on Mg(2+) as a cofactor.

It is found in the cell inner membrane. It carries out the reaction alpha-ribazole + adenosylcob(III)inamide-GDP = adenosylcob(III)alamin + GMP + H(+). The enzyme catalyses alpha-ribazole 5'-phosphate + adenosylcob(III)inamide-GDP = adenosylcob(III)alamin 5'-phosphate + GMP + H(+). The protein operates within cofactor biosynthesis; adenosylcobalamin biosynthesis; adenosylcobalamin from cob(II)yrinate a,c-diamide: step 7/7. Functionally, joins adenosylcobinamide-GDP and alpha-ribazole to generate adenosylcobalamin (Ado-cobalamin). Also synthesizes adenosylcobalamin 5'-phosphate from adenosylcobinamide-GDP and alpha-ribazole 5'-phosphate. This Brucella abortus (strain S19) protein is Adenosylcobinamide-GDP ribazoletransferase.